The sequence spans 984 residues: uncharacterized protein (984 aa).

This is an uncharacterized protein from Ostreid herpesvirus 1 (isolate France) (OsHV-1).